The following is a 333-amino-acid chain: Ephrin-B2 (333 aa).

The N-terminal stretch at 1-27 (MAVRRDSVWKYCWGVLMVLCRTAISKS) is a signal peptide. Residues 28 to 164 (IVLEPIYWNS…TRAMKILMKV (137 aa)) form the Ephrin RBD domain. At 28–229 (IVLEPIYWNS…ILGSEVALFA (202 aa)) the chain is on the extracellular side. N-linked (GlcNAc...) asparagine glycosylation occurs at asparagine 36. Intrachain disulfides connect cysteine 62/cysteine 101 and cysteine 89/cysteine 153. Residue asparagine 139 is glycosylated (N-linked (GlcNAc...) asparagine). Residues 165–213 (GQDASSAGSTRNKDPTRRPELEAGTNGRSSTTSPFVKPNPGSSTDGNSA) are disordered. Positions 175–185 (RNKDPTRRPEL) are enriched in basic and acidic residues. The span at 190–213 (NGRSSTTSPFVKPNPGSSTDGNSA) shows a compositional bias: polar residues. Residues 230-250 (GIASGCIIFIVIIITLVVLLL) form a helical membrane-spanning segment. Over 251-333 (KYRRRHRKHS…QSPANIYYKV (83 aa)) the chain is Cytoplasmic. Residue serine 260 is modified to Phosphoserine. Threonine 274 bears the Phosphothreonine mark. The residue at position 277 (arginine 277) is an Omega-N-methylarginine. The PDZ-binding signature appears at 331 to 333 (YKV).

The protein belongs to the ephrin family. In terms of assembly, interacts with PDZRN3. Binds to the receptor tyrosine kinases EPHA4, EPHB4 and EPHA3. As to quaternary structure, (Microbial infection) Interacts with Hendra virus and Nipah virus G protein. Post-translationally, inducible phosphorylation of tyrosine residues in the cytoplasmic domain. Lung and kidney.

The protein localises to the cell membrane. It localises to the cell junction. Its subcellular location is the adherens junction. Its function is as follows. Cell surface transmembrane ligand for Eph receptors, a family of receptor tyrosine kinases which are crucial for migration, repulsion and adhesion during neuronal, vascular and epithelial development. Binds promiscuously Eph receptors residing on adjacent cells, leading to contact-dependent bidirectional signaling into neighboring cells. The signaling pathway downstream of the receptor is referred to as forward signaling while the signaling pathway downstream of the ephrin ligand is referred to as reverse signaling. Binds to receptor tyrosine kinase including EPHA4, EPHA3 and EPHB4. Together with EPHB4 plays a central role in heart morphogenesis and angiogenesis through regulation of cell adhesion and cell migration. EPHB4-mediated forward signaling controls cellular repulsion and segregation from EFNB2-expressing cells. May play a role in constraining the orientation of longitudinally projecting axons. In terms of biological role, (Microbial infection) Acts as a receptor for Hendra virus and Nipah virus. In Homo sapiens (Human), this protein is Ephrin-B2 (EFNB2).